A 255-amino-acid chain; its full sequence is 5'-nucleotidase SurE (255 aa).

A divalent metal cation contacts are provided by aspartate 8, aspartate 9, serine 40, and asparagine 93.

Belongs to the SurE nucleotidase family. Requires a divalent metal cation as cofactor.

The protein resides in the cytoplasm. It catalyses the reaction a ribonucleoside 5'-phosphate + H2O = a ribonucleoside + phosphate. Its function is as follows. Nucleotidase that shows phosphatase activity on nucleoside 5'-monophosphates. This Rhodopseudomonas palustris (strain HaA2) protein is 5'-nucleotidase SurE.